A 221-amino-acid polypeptide reads, in one-letter code: DNA mismatch repair protein MutH (221 aa).

Belongs to the MutH family.

It localises to the cytoplasm. In terms of biological role, sequence-specific endonuclease that cleaves unmethylated GATC sequences. It is involved in DNA mismatch repair. The polypeptide is DNA mismatch repair protein MutH (Vibrio cholerae serotype O1 (strain ATCC 39315 / El Tor Inaba N16961)).